Reading from the N-terminus, the 790-residue chain is MENFQYSVQLSDQDWAEFSATADECGLLQAGLASGDELLSSDIDQGDSSGSSPPRAPPLPTGQLAAGGRSRRGCEEEDVATQQPVSRSQGEPVLALGTGQQTPSTSARAEAPPSLGPGASPPSQFSSCPGPASSGDQMQRLLQGPAPRPPGEPPGSPKSPGHSTGSQRPPDSPGAPPRSPSRKKRRAVGAKGGGHTGASASAQTGSPLLPAASPETAKLMAKAGQEELGPGPAGAPEPGPRSPVQEDRPGPGLGLSTPVPVTEQGTDQIRTPRRAKLHTVSTTVWEALPDVSRAKSDMAVSTPASEPQPDRDMAVSTPASEPQSDRDMAVSTPASEPQPDTDMAVSTPASEPQPDRDMAVSIPASKPQSDTAVSTPASEPQSSVALSTPISKPQLDTDVAVSTPASKHGLDVALPTAGPVAKLEVASSPPVSEAVPRMTESSGLVSTPVPRADAAGLAWPPTRRAGPDVVEMEAVVSEPSAGAPGCCSGAPALGLTQVPRKKKVRFSVAGPSPNKPGSGQASARPSAPQTATGAHGGPGAWEAVAVGPRPHQPRILKHLPRPPPSAVTRVGPGSSFAVTLPEAYEFFFCDTIEENEEAEAAAAGQDPAGVQWPDMCEFFFPDVGAQRSRRRGSPEPLPRADPVPAPIPGDPVPISIPEVYEHFFFGEDRLEGVLGPAVPLPLQALEPPRSASEGAGPGTPLKPAVVERLHLALRRAGELRGPVPSFAFSQNDMCLVFVAFATWAVRTSDPHTPDAWKTALLANVGTISAIRYFRRQVGQGRRSHSPSPSS.

Disordered stretches follow at residues 38 to 391 (LLSS…TPIS), 425 to 449 (VASS…STPV), 507 to 545 (SVAG…EAVA), and 626 to 648 (QRSR…APIP). Residues 40 to 52 (SSDIDQGDSSGSS) show a composition bias toward low complexity. Polar residues-rich tracts occupy residues 80-89 (ATQQPVSRSQ) and 98-107 (TGQQTPSTSA). Low complexity predominate over residues 111–123 (APPSLGPGASPPS). Over residues 146 to 157 (APRPPGEPPGSP) the composition is skewed to pro residues. Low complexity predominate over residues 158–169 (KSPGHSTGSQRP). Residues 170–179 (PDSPGAPPRS) show a composition bias toward pro residues. Over residues 366–391 (KPQSDTAVSTPASEPQSSVALSTPIS) the composition is skewed to polar residues. The segment covering 515-532 (KPGSGQASARPSAPQTAT) has biased composition (polar residues). Residues 635–648 (EPLPRADPVPAPIP) show a composition bias toward pro residues.

In terms of tissue distribution, muscle-specific expression is increased by endurance exercise.

The protein resides in the cytoplasm. It localises to the nucleus. Regulates the expression of selective PPARGC1A/B and ESRRA/B/G target genes with roles in glucose and lipid metabolism, energy transfer, contractile function, muscle mitochondrial biogenesis and oxidative capacity. Required for the efficient induction of MT-CO2, MT-CO3, COX4I1, TFB1M, TFB2M, POLRMT and SIRT3 by PPARGC1A. Positively regulates the PPARGC1A/ESRRG-induced expression of CKMT2, TNNI3 and SLC2A4 and negatively regulates the PPARGC1A/ESRRG-induced expression of PDK4. This Homo sapiens (Human) protein is PGC-1 and ERR-induced regulator in muscle protein 1 (PERM1).